The primary structure comprises 230 residues: Ephrin-A3 (230 aa).

An N-terminal signal peptide occupies residues Met-1–Ala-22. Residues Gly-30–Ser-161 enclose the Ephrin RBD domain. Residues Asn-38, Asn-67, Asn-84, and Asn-92 are each glycosylated (N-linked (GlcNAc...) asparagine). 2 disulfide bridges follow: Cys-63/Cys-102 and Cys-91/Cys-150. Residue Gly-206 is the site of GPI-anchor amidated glycine attachment. Residues Thr-207–Ser-230 constitute a propeptide, removed in mature form.

The protein belongs to the ephrin family. Interacts with EPHA8; activates EPHA8. In terms of tissue distribution, expressed in myogenic progenitor cells.

The protein localises to the cell membrane. Its function is as follows. Cell surface GPI-bound ligand for Eph receptors, a family of receptor tyrosine kinases which are crucial for migration, repulsion and adhesion during neuronal, vascular and epithelial development. Binds promiscuously Eph receptors residing on adjacent cells, leading to contact-dependent bidirectional signaling into neighboring cells. The signaling pathway downstream of the receptor is referred to as forward signaling while the signaling pathway downstream of the ephrin ligand is referred to as reverse signaling. The chain is Ephrin-A3 (Efna3) from Mus musculus (Mouse).